Reading from the N-terminus, the 265-residue chain is Hemin import ATP-binding protein HmuV (265 aa).

The region spanning 10 to 247 (LVARHLRFQT…ETLAHWYRAD (238 aa)) is the ABC transporter domain. An ATP-binding site is contributed by 42–49 (GPNGAGKS).

Belongs to the ABC transporter superfamily. Heme (hemin) importer (TC 3.A.1.14.5) family. In terms of assembly, the complex is composed of two ATP-binding proteins (HmuV), two transmembrane proteins (HmuU) and a solute-binding protein (HmuT).

It localises to the cell inner membrane. In terms of biological role, part of the ABC transporter complex HmuTUV involved in hemin import. Responsible for energy coupling to the transport system. The protein is Hemin import ATP-binding protein HmuV of Pectobacterium atrosepticum (strain SCRI 1043 / ATCC BAA-672) (Erwinia carotovora subsp. atroseptica).